The sequence spans 392 residues: Bifunctional enzyme Fae/Hps (392 aa).

The formaldehyde-activating enzyme stretch occupies residues 1–161 (MFLVGEALIG…YEKERSVHPV (161 aa)). The active-site Proton donor is the His17. Positions 19, 48, 66, 68, and 83 each coordinate substrate. Residues 162-392 (MGYRVMRLWD…IDQYRIMTDF (231 aa)) are 3-hexulose-6-phosphate synthase.

It in the N-terminal section; belongs to the formaldehyde-activating enzyme family. The protein in the C-terminal section; belongs to the HPS/KGPDC family. HPS subfamily.

The enzyme catalyses 5,6,7,8-tetrahydromethanopterin + formaldehyde = 5,10-methylenetetrahydromethanopterin + H2O. It carries out the reaction D-ribulose 5-phosphate + formaldehyde = D-arabino-hex-3-ulose 6-phosphate. Its pathway is carbohydrate biosynthesis; D-ribose 5-phosphate biosynthesis. Its function is as follows. Catalyzes the condensation of formaldehyde with tetrahydromethanopterin (H(4)MPT) to 5,10-methylenetetrahydromethanopterin. In terms of biological role, catalyzes the reversible formation of ribulose-5-phosphate and formaldehyde from 3-hexulose-6-phosphate. The chain is Bifunctional enzyme Fae/Hps from Methanothrix thermoacetophila (strain DSM 6194 / JCM 14653 / NBRC 101360 / PT) (Methanosaeta thermophila).